Reading from the N-terminus, the 688-residue chain is Potassium-transporting ATPase ATP-binding subunit (688 aa).

Helical transmembrane passes span 37–57 (FLVYISSILTTILYAVSLVGI), 65–85 (ILGITIILWLTVLFANFAEAI), 219–239 (IALQILLISLTIIFLLVTVSL), and 262–282 (VALLVCLAPTTIGALLSSIGI). Asp313 (4-aspartylphosphate intermediate) is an active-site residue. ATP is bound by residues Asp350, Glu354, 383–390 (FTAKTRMS), and Lys401. Asp524 and Asp528 together coordinate Mg(2+). The next 3 membrane-spanning stretches (helical) occupy residues 594-614 (FAIIPALFIGLYPGLSALNIM), 622-642 (AIFSAIIYNALIIVALIPLAL), and 668-688 (IIVPFIAIKVIDVLITAIGIV).

The protein belongs to the cation transport ATPase (P-type) (TC 3.A.3) family. Type IA subfamily. In terms of assembly, the system is composed of three essential subunits: KdpA, KdpB and KdpC.

It is found in the cell membrane. It carries out the reaction K(+)(out) + ATP + H2O = K(+)(in) + ADP + phosphate + H(+). Functionally, part of the high-affinity ATP-driven potassium transport (or Kdp) system, which catalyzes the hydrolysis of ATP coupled with the electrogenic transport of potassium into the cytoplasm. This subunit is responsible for energy coupling to the transport system and for the release of the potassium ions to the cytoplasm. This Clostridium botulinum (strain Alaska E43 / Type E3) protein is Potassium-transporting ATPase ATP-binding subunit.